A 56-amino-acid chain; its full sequence is Prokaryotic ubiquitin-like protein UBact (56 aa).

The interval 1–56 is disordered; the sequence is MPDQAQKTRPVGPGPSGGGEGPGSPKVEKPNTEELLKRMRKVDPDQAKRYRQRTGQ. The span at 26 to 48 shows a compositional bias: basic and acidic residues; that stretch reads KVEKPNTEELLKRMRKVDPDQAK. Glutamine 56 carries the deamidated glutamine modification. Glutamine 56 participates in a covalent cross-link: Isoglutamyl lysine isopeptide (Gln-Lys) (interchain with K-? in acceptor proteins).

Belongs to the ubiquitin-like protein UBact family. Post-translationally, may be modified by deamidation of its C-terminal glutamine to glutamate by the adjacently encoded deamidase. This could be a prerequisite to the subsequent conjugation, as shown in the other prokaryotic ubiquitin-like protein Pup.

Its function is as follows. May function as a protein modifier covalently attached to lysine residues of substrate proteins. This may serve to target the modified proteins for degradation by proteasomes. This Pedosphaera parvula (strain Ellin514) protein is Prokaryotic ubiquitin-like protein UBact.